The chain runs to 771 residues: Hyperosmolality-gated Ca2+ permeable channel 1.3 (771 aa).

Residues 7-27 (IGVAAAINILTAIIFLLAFAI) traverse the membrane as a helical segment. S54 carries the post-translational modification Phosphoserine. The next 9 membrane-spanning stretches (helical) occupy residues 101–121 (IYLI…SILV), 158–178 (FWTH…VLMK), 375–395 (LIMH…IAFV), 427–447 (FLPG…LMVM), 467–487 (YYIF…SAFE), 512–532 (ATFF…GEIL), 584–604 (PVTP…YLVF), 630–650 (IISA…TKGA), and 651–671 (AQST…HRYC). The segment at 744-771 (VPTKRQSRINTPAVSHASRGSSRSPPSK) is disordered. Positions 751 to 771 (RINTPAVSHASRGSSRSPPSK) are enriched in polar residues.

This sequence belongs to the CSC1 (TC 1.A.17) family. In terms of processing, phosphorylated at Ser-54 by BIK1 in response to pathogen-associated molecular pattern (PAMP) perception, promoting its activation. As to expression, preferentially expressed in guard cells.

The protein localises to the cell membrane. It catalyses the reaction Ca(2+)(in) = Ca(2+)(out). With respect to regulation, activated following phosphorylation at Ser-54 by BIK1. In terms of biological role, calcium-permeable channel that plays a key role in plant stomatal immunity. In response to pathogen-associated molecular pattern (PAMP) perception, phosphorylated and activated by BIK1, triggering rapid influx of calcium ions across the plasma membrane, leading to stomatal closure. The sequence is that of Hyperosmolality-gated Ca2+ permeable channel 1.3 from Arabidopsis thaliana (Mouse-ear cress).